A 462-amino-acid chain; its full sequence is UDP-N-acetylmuramate--L-alanine ligase (462 aa).

119–125 (GTHGKTT) provides a ligand contact to ATP.

Belongs to the MurCDEF family.

The protein localises to the cytoplasm. It catalyses the reaction UDP-N-acetyl-alpha-D-muramate + L-alanine + ATP = UDP-N-acetyl-alpha-D-muramoyl-L-alanine + ADP + phosphate + H(+). It participates in cell wall biogenesis; peptidoglycan biosynthesis. Its function is as follows. Cell wall formation. The polypeptide is UDP-N-acetylmuramate--L-alanine ligase (Parabacteroides distasonis (strain ATCC 8503 / DSM 20701 / CIP 104284 / JCM 5825 / NCTC 11152)).